Consider the following 369-residue polypeptide: Uroporphyrinogen decarboxylase (369 aa).

Residues 36–40 (RQAGR), Asp-86, Tyr-162, Ser-217, and His-342 each bind substrate.

The protein belongs to the uroporphyrinogen decarboxylase family. Homodimer.

The protein localises to the cytoplasm. The catalysed reaction is uroporphyrinogen III + 4 H(+) = coproporphyrinogen III + 4 CO2. It participates in porphyrin-containing compound metabolism; protoporphyrin-IX biosynthesis; coproporphyrinogen-III from 5-aminolevulinate: step 4/4. Functionally, catalyzes the decarboxylation of four acetate groups of uroporphyrinogen-III to yield coproporphyrinogen-III. The polypeptide is Uroporphyrinogen decarboxylase (Albidiferax ferrireducens (strain ATCC BAA-621 / DSM 15236 / T118) (Rhodoferax ferrireducens)).